The following is a 698-amino-acid chain: Elongation factor G (698 aa).

Positions 8-284 (ANVRNIGIMA…AVVDYLPSPL (277 aa)) constitute a tr-type G domain. Residues 17–24 (AHIDAGKT), 81–85 (DTPGH), and 135–138 (NKLD) each bind GTP.

Belongs to the TRAFAC class translation factor GTPase superfamily. Classic translation factor GTPase family. EF-G/EF-2 subfamily.

It localises to the cytoplasm. In terms of biological role, catalyzes the GTP-dependent ribosomal translocation step during translation elongation. During this step, the ribosome changes from the pre-translocational (PRE) to the post-translocational (POST) state as the newly formed A-site-bound peptidyl-tRNA and P-site-bound deacylated tRNA move to the P and E sites, respectively. Catalyzes the coordinated movement of the two tRNA molecules, the mRNA and conformational changes in the ribosome. The sequence is that of Elongation factor G from Salinispora tropica (strain ATCC BAA-916 / DSM 44818 / JCM 13857 / NBRC 105044 / CNB-440).